The chain runs to 161 residues: Cytochrome c-type biogenesis protein CcmE (161 aa).

Topologically, residues Met-1–Arg-8 are cytoplasmic. A helical; Signal-anchor for type II membrane protein transmembrane segment spans residues Leu-9–Ala-29. Residues Leu-30–Gln-161 lie on the Periplasmic side of the membrane. Positions 129 and 133 each coordinate heme.

It belongs to the CcmE/CycJ family.

The protein resides in the cell inner membrane. Functionally, heme chaperone required for the biogenesis of c-type cytochromes. Transiently binds heme delivered by CcmC and transfers the heme to apo-cytochromes in a process facilitated by CcmF and CcmH. In Vibrio vulnificus (strain CMCP6), this protein is Cytochrome c-type biogenesis protein CcmE.